The sequence spans 358 residues: Psilocybin cluster transcription regulator (358 aa).

Disordered regions lie at residues 1–40 (MAPA…IAGM) and 62–212 (SGGK…RRRR). Pro residues predominate over residues 18–29 (PPAPGAPAPANA). The segment covering 79-91 (QTLSNLAQAQPYG) has biased composition (polar residues). The span at 179–190 (PTTGRRGGRSAT) shows a compositional bias: low complexity. The segment covering 195-209 (EWSRQRKDNHKEVER) has biased composition (basic and acidic residues). Residues 199–212 (QRKDNHKEVERRRR) form a basic motif region. In terms of domain architecture, bHLH spans 199 to 249 (QRKDNHKEVERRRRGNINEGINELGRIVPSGSGEKAKGAILSRAVQYIHHL). Positions 213–249 (GNINEGINELGRIVPSGSGEKAKGAILSRAVQYIHHL) are helix-loop-helix motif. The stretch at 264 to 306 (KLLMDQAMGDLQAQLEEVKRLWEEERMARTRLEAELEVLRNMN) forms a coiled coil. Residues 308-358 (VNAGSAPASKDESAAGTKRRSTDGAEAATAATESSTANAEGERDGKRQRTE) form a disordered region. Residues 331 to 346 (GAEAATAATESSTANA) are compositionally biased toward low complexity. A compositionally biased stretch (basic and acidic residues) spans 347–358 (EGERDGKRQRTE).

It localises to the nucleus. Transcription factor that may regulate the expression of the gene cluster that mediates the biosynthesis of psilocybin, a psychotropic tryptamine-derived natural product. This chain is Psilocybin cluster transcription regulator, found in Psilocybe cubensis (Psychedelic mushroom).